The sequence spans 261 residues: 3-methyl-2-oxobutanoate hydroxymethyltransferase (261 aa).

Residues Asp44 and Asp83 each coordinate Mg(2+). Residues 44–45 (DS), Asp83, and Lys113 contribute to the 3-methyl-2-oxobutanoate site. Glu115 serves as a coordination point for Mg(2+). Catalysis depends on Glu183, which acts as the Proton acceptor.

It belongs to the PanB family. Homodecamer; pentamer of dimers. Requires Mg(2+) as cofactor.

The protein localises to the cytoplasm. It carries out the reaction 3-methyl-2-oxobutanoate + (6R)-5,10-methylene-5,6,7,8-tetrahydrofolate + H2O = 2-dehydropantoate + (6S)-5,6,7,8-tetrahydrofolate. Its pathway is cofactor biosynthesis; (R)-pantothenate biosynthesis; (R)-pantoate from 3-methyl-2-oxobutanoate: step 1/2. Functionally, catalyzes the reversible reaction in which hydroxymethyl group from 5,10-methylenetetrahydrofolate is transferred onto alpha-ketoisovalerate to form ketopantoate. This chain is 3-methyl-2-oxobutanoate hydroxymethyltransferase, found in Cyanothece sp. (strain PCC 7425 / ATCC 29141).